Consider the following 159-residue polypeptide: Ribosomal RNA large subunit methyltransferase H (159 aa).

Residues L76, G108, and 127 to 132 (FGRLTL) contribute to the S-adenosyl-L-methionine site.

This sequence belongs to the RNA methyltransferase RlmH family. As to quaternary structure, homodimer.

The protein resides in the cytoplasm. The enzyme catalyses pseudouridine(1915) in 23S rRNA + S-adenosyl-L-methionine = N(3)-methylpseudouridine(1915) in 23S rRNA + S-adenosyl-L-homocysteine + H(+). Functionally, specifically methylates the pseudouridine at position 1915 (m3Psi1915) in 23S rRNA. The chain is Ribosomal RNA large subunit methyltransferase H from Listeria monocytogenes serotype 4b (strain CLIP80459).